A 655-amino-acid chain; its full sequence is Squalene-tetrahymanol cyclase THC1 (655 aa).

Residues 1–20 (MKKILIGLIIGLFLFSSVNA) form the signal peptide. Residues N23, N44, N69, and N77 are each glycosylated (N-linked (GlcNAc...) asparagine). D373 serves as the catalytic Proton donor. PFTB repeat units lie at residues 393–435 (IPET…GIAN) and 515–562 (VQNS…GLLA).

The protein belongs to the terpene cyclase/mutase family.

It is found in the membrane. It carries out the reaction tetrahymanol = squalene + H2O. Its activity is regulated as follows. 2,3-iminosqualene and N,N-dimethyldodecylamine~N-oxlde are effective inhibitors with IC(50) values of 50 and 30 nM, respectively. In terms of biological role, squalene cyclase that catalyzes the oxygen-independent cyclization of squalene into tetrahymanol, a triterpenoid sterol with five cyclohexyl rings that is involved in membrane integrity, permeability and fluidity. In Tetrahymena thermophila (strain SB210), this protein is Squalene-tetrahymanol cyclase THC1.